We begin with the raw amino-acid sequence, 948 residues long: Phosphatidylinositol-glycan-specific phospholipase D (948 aa).

The first 24 residues, 1–24, serve as a signal peptide directing secretion; it reads MKNKIILLWLLLIVILCTISNVKG. N-linked (GlcNAc...) asparagine glycosylation is found at N39, N78, N148, N300, N433, N452, N506, and N535. FG-GAP repeat units follow at residues 451 to 512, 526 to 588, 596 to 656, and 663 to 724; these read TNFT…SVTI, QVAT…NPAG, LPSI…RISG, and DADY…LNSF. N-linked (GlcNAc...) asparagine glycosylation is found at N749 and N788. FG-GAP repeat units follow at residues 799–861 and 895–948; these read NLLL…LTND and SSGG…NIFQ.

It belongs to the GPLD1 family. Ca(2+) serves as cofactor.

The protein localises to the secreted. The enzyme catalyses a 6-(alpha-D-glucosaminyl)-1-(1,2-diacyl-sn-glycero-3-phospho)-1D-myo-inositol + H2O = 6-(alpha-D-glucosaminyl)-1D-myo-inositol + a 1,2-diacyl-sn-glycero-3-phosphate + H(+). Hydrolyzes the inositol phosphate linkage in proteins anchored by phosphatidylinositol glycans (GPI-anchor) thus releasing these proteins from the membrane. May also cleave GPI anchor intermediates intracellularly. The chain is Phosphatidylinositol-glycan-specific phospholipase D (pldG) from Dictyostelium discoideum (Social amoeba).